A 159-amino-acid polypeptide reads, in one-letter code: Small ribosomal subunit protein uS7 (159 aa).

This sequence belongs to the universal ribosomal protein uS7 family. In terms of assembly, part of the 30S ribosomal subunit. Contacts proteins S9 and S11.

Functionally, one of the primary rRNA binding proteins, it binds directly to 16S rRNA where it nucleates assembly of the head domain of the 30S subunit. Is located at the subunit interface close to the decoding center, probably blocks exit of the E-site tRNA. The sequence is that of Small ribosomal subunit protein uS7 from Rickettsia felis (strain ATCC VR-1525 / URRWXCal2) (Rickettsia azadi).